Here is a 397-residue protein sequence, read N- to C-terminus: FAD-dependent monooxygenase trt8 (397 aa).

Residue Tyr53 is part of the active site. 2 residues coordinate FAD: Asp145 and Ala158.

It belongs to the paxM FAD-dependent monooxygenase family. It depends on FAD as a cofactor.

The protein operates within secondary metabolite biosynthesis; terpenoid biosynthesis. FAD-dependent monooxygenase; part of the gene cluster that mediates the biosynthesis of terretonin, a fungal meroterpenoid that acts as a mycotoxin. The first step of the pathway is the synthesis of 3,5-dimethylorsellinic acid (DMOA) by the polyketide synthase trt4. DMOA is then prenylated into farnesyl-DMOA by the polyprenyl transferase trt2. Methylation by the methyltransferase trt5 then leads to farnesyl-DMOA methyl ester which is further subject to epoxidation by the FAD-dependent monooxygenase trt8 to yield epoxyfarnesyl-DMOA methyl ester. Cyclization of epoxyfarnesyl-DMOA methyl ester by the terpene cyclase trt1 leads to a tetracycle intermediate which is in turn converted to preterretonin. Dehydrogenase trt9 comes next to transform preterretonin to preterrenoid. The FAD-dependent monooxygenase trt3 is then required for the C-hydroxylation at C16 of preterrenoid to yield terrenoid. The cytochrome P450 trt6 catalyzes three successive oxidations to transform terrenoid into an unstable intermediate, which then undergoes the D-ring expansion and unusual rearrangement of the methoxy group to afford the core skeleton of terretonin. Trt14 catalyzes the D-ring expansion of terretonin involving intramolecular methoxy rearrangement as well as the hydrolysis of the expanded D-ring and the methyl ester moiety. Finally, the nonheme iron-dependent dioxygenase trt7 accomplishes the last two oxidation reactions steps to complete the biosynthesis of terretonin. Terretonin C is produced via spontaneous decarboxylation of the terretonin precursor. Another shunt product of the terretonin biosynthesis is dihydrofarnesyl-DMOA, derived from epoxyfarnesyl-DMOA through hydrolysis of the epoxide. The polypeptide is FAD-dependent monooxygenase trt8 (Aspergillus terreus (strain NIH 2624 / FGSC A1156)).